We begin with the raw amino-acid sequence, 198 residues long: FMN-dependent NADH:quinone oxidoreductase (198 aa).

96 to 99 (MYNF) serves as a coordination point for FMN.

Belongs to the azoreductase type 1 family. Homodimer. Requires FMN as cofactor.

It carries out the reaction 2 a quinone + NADH + H(+) = 2 a 1,4-benzosemiquinone + NAD(+). It catalyses the reaction N,N-dimethyl-1,4-phenylenediamine + anthranilate + 2 NAD(+) = 2-(4-dimethylaminophenyl)diazenylbenzoate + 2 NADH + 2 H(+). In terms of biological role, quinone reductase that provides resistance to thiol-specific stress caused by electrophilic quinones. Its function is as follows. Also exhibits azoreductase activity. Catalyzes the reductive cleavage of the azo bond in aromatic azo compounds to the corresponding amines. This is FMN-dependent NADH:quinone oxidoreductase from Burkholderia thailandensis (strain ATCC 700388 / DSM 13276 / CCUG 48851 / CIP 106301 / E264).